The primary structure comprises 419 residues: Dual specificity mitogen-activated protein kinase kinase 7 (419 aa).

Alanine 2 bears the N-acetylalanine mark. Residues 2–30 (AASSLEQKLSRLEAKLKQENREARRRIDL) adopt a coiled-coil conformation. Positions 18-30 (KQENREARRRIDL) are enriched in basic and acidic residues. Positions 18-76 (KQENREARRRIDLNLDISPQRPRPTLQLPLANDGGSRSPSSESSPQHPTPPARPRHMLG) are disordered. Positions 36–63 (PQRPRPTLQLPLANDGGSRSPSSESSPQ) are enriched in low complexity. The d domain stretch occupies residues 37 to 57 (QRPRPTLQLPLANDGGSRSPS). In terms of domain architecture, Protein kinase spans 120-380 (LENLGEMGSG…YNKLLEHSFI (261 aa)). ATP-binding positions include 126–134 (MGSGTCGQV) and lysine 149. Aspartate 243 (proton acceptor) is an active-site residue. Position 271 is a phosphoserine; by MAP3K (serine 271). At threonine 275 the chain carries Phosphothreonine; by MAP3K. The interval 377-400 (HSFIKRYETLEVDVASWFKDVMAK) is DVD domain. The residue at position 411 (serine 411) is a Phosphoserine.

It belongs to the protein kinase superfamily. STE Ser/Thr protein kinase family. MAP kinase kinase subfamily. As to quaternary structure, interacts with isoform 1 of VRK2. Interacts (via its D domain) with its substrates MAPK8/JNK1, MAPK9/JNK2 and MAPK10/JNK3. Interacts (via its DVD domain) with MAP3Ks activators like MAP3K5/ASK1 and MAP3K1/MEKK1. Interacts with MAPK8IP1/JIP1, MAPK8IP2/JIP2 and MAPK8IP3/JIP3 scaffold proteins. Interacts with RASSF7, the interaction promotes phosphorylation. Found in a complex with SH3RF1, RAC1, MAP3K11/MLK3, MAPK8IP1/JIP1 and MAPK8/JNK1. Found in a complex with SH3RF1, RAC2, MAP3K7/TAK1, MAPK8IP1/JIP1, MAPK8/JNK1 and MAPK9/JNK2. Mg(2+) is required as a cofactor. Post-translationally, activated by phosphorylation on Ser-271 and Thr-275 by MAP kinase kinase kinases (MAP3Ks). Ubiquitous; with highest level of expression in skeletal muscle. Isoform 3 is found at low levels in placenta, fetal liver, and skeletal muscle.

It is found in the nucleus. The protein localises to the cytoplasm. The catalysed reaction is L-seryl-[protein] + ATP = O-phospho-L-seryl-[protein] + ADP + H(+). The enzyme catalyses L-threonyl-[protein] + ATP = O-phospho-L-threonyl-[protein] + ADP + H(+). It catalyses the reaction L-tyrosyl-[protein] + ATP = O-phospho-L-tyrosyl-[protein] + ADP + H(+). With respect to regulation, activated by phosphorylation by specific MAP kinase kinase kinases such as MAP3K1/MEKK1, MAP3K3/MEKK3, MAP3K11/MLK3 and MAP3K12/DLK. Dual specificity protein kinase which acts as an essential component of the MAP kinase signal transduction pathway. Essential component of the stress-activated protein kinase/c-Jun N-terminal kinase (SAP/JNK) signaling pathway. With MAP2K4/MKK4, is the one of the only known kinase to directly activate the stress-activated protein kinase/c-Jun N-terminal kinases MAPK8/JNK1, MAPK9/JNK2 and MAPK10/JNK3. MAP2K4/MKK4 and MAP2K7/MKK7 both activate the JNKs by phosphorylation, but they differ in their preference for the phosphorylation site in the Thr-Pro-Tyr motif. MAP2K4/MKK4 shows preference for phosphorylation of the Tyr residue and MAP2K7/MKK7 for the Thr residue. The monophosphorylation of JNKs on the Thr residue is sufficient to increase JNK activity indicating that MAP2K7/MKK7 is important to trigger JNK activity, while the additional phosphorylation of the Tyr residue by MAP2K4/MKK4 ensures optimal JNK activation. Has a specific role in JNK signal transduction pathway activated by pro-inflammatory cytokines. The MKK/JNK signaling pathway is also involved in mitochondrial death signaling pathway, including the release cytochrome c, leading to apoptosis. Part of a non-canonical MAPK signaling pathway, composed of the upstream MAP3K12 kinase and downstream MAP kinases MAPK1/ERK2 and MAPK3/ERK1, that enhances the AP-1-mediated transcription of APP in response to APOE. This is Dual specificity mitogen-activated protein kinase kinase 7 (MAP2K7) from Homo sapiens (Human).